The sequence spans 178 residues: Transmembrane protein 196 (178 aa).

Transmembrane regions (helical) follow at residues 11 to 31 (LLVL…VGAV), 47 to 67 (SSPV…ILCA), 73 to 93 (LVMI…ILNF), and 106 to 126 (LYPL…GCTL).

As to expression, expression is significantly decreased in lung cancer cells compared to normal lung tissue (at protein level).

The protein localises to the cytoplasm. Its subcellular location is the membrane. In terms of biological role, acts as a tumor suppressor in lung cancer. Inhibits tumor cell growth by inhibiting cell proliferation and migration and promoting cell apoptosis. Inhibits metastasis of lung cancer by suppressing beta-catenin expression in the Wnt/beta-catenin signaling pathway. This Homo sapiens (Human) protein is Transmembrane protein 196 (TMEM196).